The following is a 381-amino-acid chain: GDP-mannose transporter (381 aa).

The span at 1 to 12 shows a compositional bias: basic and acidic residues; sequence MSDDKKSDDYRV. The interval 1-28 is disordered; sequence MSDDKKSDDYRVDMPSSRTSRAPSPIMR. Residues 1 to 36 lie on the Cytoplasmic side of the membrane; sequence MSDDKKSDDYRVDMPSSRTSRAPSPIMRPALKSAPS. The helical transmembrane segment at 37 to 57 threads the bilayer; sequence LTENPMAAVLAYCASSILMTV. Residues 58 to 67 are Lumenal-facing; that stretch reads TNKYVLSGVD. The helical transmembrane segment at 68 to 88 threads the bilayer; the sequence is FNLNFFLLCVQSVVCVTAISI. Residues 89–107 are Cytoplasmic-facing; that stretch reads CKAAGLITYRDFNTDEAKK. The helical transmembrane segment at 108–126 threads the bilayer; the sequence is WFPISLLLIGMIYTGTWAL. Residues 127–130 lie on the Lumenal side of the membrane; the sequence is KYLS. A helical membrane pass occupies residues 131–153; that stretch reads IPVYTIFKNLTIILIAYGEVLWF. Over 154 to 161 the chain is Cytoplasmic; sequence GGSVTPMT. The chain crosses the membrane as a helical span at residues 162–184; sequence LFSFGLMVLSSIIAAWADIQHAL. At 185 to 199 the chain is on the lumenal side; that stretch reads NSFGQQSEAANEALS. The chain crosses the membrane as a helical span at residues 200-220; sequence TMHAGYLWMAFNCVCSATYLL. Residues 221–242 lie on the Cytoplasmic side of the membrane; it reads SMRKRIKLTNFKDYDTMYYNNL. Residues 243-263 form a helical membrane-spanning segment; sequence LTIPILLVASILVEDWSSANI. At 264–274 the chain is on the lumenal side; it reads QKNFPPEQRNT. Residues 275–295 traverse the membrane as a helical segment; the sequence is VIMVMVISGMSTVFISYTSAW. Over 296-303 the chain is Cytoplasmic; the sequence is AVRVTSST. A helical membrane pass occupies residues 304-324; the sequence is TYSMVGALNKLPIAISGLVFF. The Lumenal segment spans residues 325–327; that stretch reads DAP. Residues 328-348 traverse the membrane as a helical segment; it reads VTFGSVSAIFVGFVSGIVYAV. Residues 349 to 381 lie on the Cytoplasmic side of the membrane; the sequence is AKVRQNSKPKTVLPTTNIPLSASSRSMQDSLKA.

The protein belongs to the TPT transporter family. SLC35D subfamily. Homooligomer.

The protein resides in the golgi apparatus membrane. It localises to the cytoplasmic vesicle membrane. The protein localises to the endoplasmic reticulum membrane. Involved in the import of GDP-mannose from the cytoplasm into the Golgi lumen. This Phaeosphaeria nodorum (strain SN15 / ATCC MYA-4574 / FGSC 10173) (Glume blotch fungus) protein is GDP-mannose transporter (VRG4).